Consider the following 373-residue polypeptide: Muscleblind-like protein 2 (373 aa).

4 C3H1-type zinc fingers span residues tryptophan 13 to lysine 41, asparagine 47 to threonine 73, threonine 176 to aspartate 204, and aspartate 212 to alanine 238.

It belongs to the muscleblind family. Interacts with ITGA3.

The protein resides in the nucleus. The protein localises to the cytoplasm. Its function is as follows. Mediates pre-mRNA alternative splicing regulation. Acts either as activator or repressor of splicing on specific pre-mRNA targets. Inhibits cardiac troponin-T (TNNT2) pre-mRNA exon inclusion but induces insulin receptor (IR) pre-mRNA exon inclusion in muscle. Antagonizes the alternative splicing activity pattern of CELF proteins. RNA-binding protein that binds to 5'ACACCC-3' core sequence, termed zipcode, within the 3'UTR of ITGA3. Binds to CUG triplet repeat expansion in myotonic dystrophy muscle cells by sequestering the target RNAs. Together with RNA binding proteins RBPMS and RBFOX2, activates vascular smooth muscle cells alternative splicing events. Regulates NCOR2 alternative splicing. Seems to regulate expression and localization of ITGA3 by transporting it from the nucleus to cytoplasm at adhesion plaques. May play a role in myotonic dystrophy pathophysiology (DM). The polypeptide is Muscleblind-like protein 2 (Mbnl2) (Mus musculus (Mouse)).